A 46-amino-acid chain; its full sequence is uncharacterized protein (46 aa).

This is an uncharacterized protein from Archaeoglobus fulgidus (strain ATCC 49558 / DSM 4304 / JCM 9628 / NBRC 100126 / VC-16).